A 333-amino-acid polypeptide reads, in one-letter code: Protoheme IX farnesyltransferase (333 aa).

A run of 8 helical transmembrane segments spans residues 36 to 56, 61 to 81, 107 to 127, 130 to 150, 158 to 178, 186 to 206, 243 to 263, and 284 to 304; these read LIPL…GWPL, LVCT…LNCL, AAFA…VSGV, LAAG…TALL, IVIG…AATG, WLFA…ALLL, FLGV…LLPF, and AKGL…LLVF.

This sequence belongs to the UbiA prenyltransferase family. Protoheme IX farnesyltransferase subfamily.

Its subcellular location is the cell inner membrane. It carries out the reaction heme b + (2E,6E)-farnesyl diphosphate + H2O = Fe(II)-heme o + diphosphate. It functions in the pathway porphyrin-containing compound metabolism; heme O biosynthesis; heme O from protoheme: step 1/1. Functionally, converts heme B (protoheme IX) to heme O by substitution of the vinyl group on carbon 2 of heme B porphyrin ring with a hydroxyethyl farnesyl side group. This chain is Protoheme IX farnesyltransferase, found in Synechococcus sp. (strain WH7803).